Consider the following 904-residue polypeptide: DNA mismatch repair protein MutS (904 aa).

Residue 655 to 662 (GPNMGGKS) coordinates ATP.

The protein belongs to the DNA mismatch repair MutS family.

This protein is involved in the repair of mismatches in DNA. It is possible that it carries out the mismatch recognition step. This protein has a weak ATPase activity. This is DNA mismatch repair protein MutS from Agrobacterium fabrum (strain C58 / ATCC 33970) (Agrobacterium tumefaciens (strain C58)).